The sequence spans 407 residues: 1-deoxy-D-xylulose 5-phosphate reductoisomerase (407 aa).

Residues Thr25, Gly26, Ser27, Ile28, Asn53, and Asn136 each coordinate NADPH. Residue Lys137 participates in 1-deoxy-D-xylulose 5-phosphate binding. Glu138 contacts NADPH. Asp162 lines the Mn(2+) pocket. Positions 163, 164, 188, and 211 each coordinate 1-deoxy-D-xylulose 5-phosphate. Glu164 contacts Mn(2+). Residue Gly217 coordinates NADPH. 1-deoxy-D-xylulose 5-phosphate is bound by residues Ser224, Asn229, Lys230, and Glu233. Mn(2+) is bound at residue Glu233.

The protein belongs to the DXR family. Mg(2+) serves as cofactor. The cofactor is Mn(2+).

It catalyses the reaction 2-C-methyl-D-erythritol 4-phosphate + NADP(+) = 1-deoxy-D-xylulose 5-phosphate + NADPH + H(+). Its pathway is isoprenoid biosynthesis; isopentenyl diphosphate biosynthesis via DXP pathway; isopentenyl diphosphate from 1-deoxy-D-xylulose 5-phosphate: step 1/6. Functionally, catalyzes the NADPH-dependent rearrangement and reduction of 1-deoxy-D-xylulose-5-phosphate (DXP) to 2-C-methyl-D-erythritol 4-phosphate (MEP). The chain is 1-deoxy-D-xylulose 5-phosphate reductoisomerase from Bradyrhizobium sp. (strain BTAi1 / ATCC BAA-1182).